Consider the following 447-residue polypeptide: Protein king tubby (447 aa).

Composition is skewed to low complexity over residues 71–92 (GTGPNVTATSITTTPTSPYSDS) and 157–169 (NNNNHTHHTNSSS). A disordered region spans residues 71 to 196 (GTGPNVTATS…GGAPDTEGDV (126 aa)).

The protein belongs to the TUB family.

Its subcellular location is the cytoplasm. The protein localises to the nucleus. This chain is Protein king tubby, found in Anopheles gambiae (African malaria mosquito).